A 305-amino-acid chain; its full sequence is MRKRARIIYNPTSGKELFKRTLPDVLIKLEKAGFETSAYATEKVGDATTEAARSLEQNYDVLIAAGGDGTLNEVINGIAEKPNRPSLGIIPMGTVNDFGRALHLPTDIMSAIDVIIEGHMTRVDIGKMNSRYFINLAAGGQLTQVSYETPSKLKSIVGPFAYYIKGFEMLPQMKAVDIRIEYDDEVFQGEALLFLLGLTNSMAGFEKLVPDAKLDDGYFTLIIVEKANLAELGHIMTLASRGEHTKHPKVHYKKAKSISVSSFTDMQLNVDGEYGGKLPGNFLNLKQHIEVFTPNDIKNEEIIEQ.

One can recognise a DAGKc domain in the interval 1–132 (MRKRARIIYN…VDIGKMNSRY (132 aa)). ATP contacts are provided by residues 10–14 (NPTSG), Thr41, 67–73 (GDGTLNE), and Thr94. Residues Lys213, Asp216, and Tyr218 each coordinate Mg(2+). Residue Glu273 is the Proton acceptor of the active site.

The protein belongs to the diacylglycerol/lipid kinase family. As to quaternary structure, homodimer. Mg(2+) is required as a cofactor.

It catalyses the reaction a 1,2-diacyl-sn-glycerol + ATP = a 1,2-diacyl-sn-glycero-3-phosphate + ADP + H(+). Its function is as follows. Catalyzes the phosphorylation of diacylglycerol (DAG) into phosphatidic acid. Is a key enzyme involved in the production of lipoteichoic acid by reintroducing DAG formed from the breakdown of membrane phospholipids into the phosphatidylglycerol biosynthetic pathway. This chain is Diacylglycerol kinase (dagK), found in Staphylococcus saprophyticus subsp. saprophyticus (strain ATCC 15305 / DSM 20229 / NCIMB 8711 / NCTC 7292 / S-41).